The primary structure comprises 435 residues: ATP-dependent protease ATPase subunit HslU (435 aa).

ATP contacts are provided by residues V18, 60–65, D248, E313, and R385; that span reads GCGKTE.

It belongs to the ClpX chaperone family. HslU subfamily. A double ring-shaped homohexamer of HslV is capped on each side by a ring-shaped HslU homohexamer. The assembly of the HslU/HslV complex is dependent on binding of ATP.

The protein resides in the cytoplasm. In terms of biological role, ATPase subunit of a proteasome-like degradation complex; this subunit has chaperone activity. The binding of ATP and its subsequent hydrolysis by HslU are essential for unfolding of protein substrates subsequently hydrolyzed by HslV. HslU recognizes the N-terminal part of its protein substrates and unfolds these before they are guided to HslV for hydrolysis. The polypeptide is ATP-dependent protease ATPase subunit HslU (Beijerinckia indica subsp. indica (strain ATCC 9039 / DSM 1715 / NCIMB 8712)).